The following is a 285-amino-acid chain: Gas vesicle protein C2 (285 aa).

Repeat copies occupy residues 22–52 (EAMD…RDMR), 53–84 (AAVD…EATA), 85–122 (AAFD…RAVT), 123–155 (TDFE…TAKQ), 156–188 (EGFE…DDTA), and 189–220 (ASFA…QTDV). The segment at 22–220 (EAMDAYAEEF…ADDTTAQTDV (199 aa)) is 6 X approximate tandem repeats.

It belongs to the halobacterial gas vesicle GvpC family.

The protein localises to the gas vesicle. Functionally, confers stability, involved in shaping gas vesicles (GV), hollow, gas filled proteinaceous nanostructures. GVs allow positioning of halobacteria at an optimal depth for growth in the poorly aerated, shallow brine pools of their habitat. Expression of 2 c-vac DNA fragments containing 2 divergently transcribed regions (gvpE-gvpF-gvpG-gvpH-gvpI-gvpJ-gvpK-gvpL-gvpM and gvpA-gvpC-gvpN-gvpO) allows H.volcanii to produce gas vesicles. This is Gas vesicle protein C2 from Halobacterium salinarum (strain ATCC 700922 / JCM 11081 / NRC-1) (Halobacterium halobium).